The primary structure comprises 381 residues: 2-epi-5-epi-valiolone synthase (381 aa).

NAD(+) contacts are provided by residues Asp50, 81–84 (EEAK), 114–118 (GIVLD), 138–139 (TS), Lys151, Lys160, and 178–181 (FLDT). The active site involves Lys151. Residues Glu193, His264, and His280 each contribute to the a divalent metal cation site.

The protein belongs to the sugar phosphate cyclases superfamily. EEVS family. Requires NAD(+) as cofactor. Co(2+) is required as a cofactor.

The catalysed reaction is D-sedoheptulose 7-phosphate = 2-epi-5-epi-valiolone + phosphate. It functions in the pathway antibiotic biosynthesis. Functionally, catalyzes the cyclization of D-sedoheptulose 7-phosphate to 2-epi-5-epi-valiolone. Involved in cetoniacytone A biosynthesis. The chain is 2-epi-5-epi-valiolone synthase from Actinomyces sp.